A 427-amino-acid polypeptide reads, in one-letter code: Cyclic 2,3-diphosphoglycerate synthetase (427 aa).

Belongs to the cyclic 2,3-diphosphoglycerate synthetase family.

It localises to the cytoplasm. It carries out the reaction (2R)-2,3-bisphosphoglycerate + ATP + H(+) = cyclic (2R)-2,3-bisphosphoglycerate + ADP + phosphate. Catalyzes the formation of cyclic 2,3-diphosphoglycerate (cDPG) by formation of an intramolecular phosphoanhydride bond at the expense of ATP. This Pyrococcus abyssi (strain GE5 / Orsay) protein is Cyclic 2,3-diphosphoglycerate synthetase.